We begin with the raw amino-acid sequence, 432 residues long: Putative D-alanyl-D-alanine carboxypeptidase (432 aa).

The chain crosses the membrane as a helical; Signal-anchor span at residues 7-25; that stretch reads ATVLLTFSLSAFAVEYPVL.

Belongs to the peptidase S12 family. YfeW subfamily.

The protein resides in the cell inner membrane. It carries out the reaction Preferential cleavage: (Ac)2-L-Lys-D-Ala-|-D-Ala. Also transpeptidation of peptidyl-alanyl moieties that are N-acyl substituents of D-alanine.. This chain is Putative D-alanyl-D-alanine carboxypeptidase, found in Salmonella enteritidis PT4 (strain P125109).